The chain runs to 425 residues: Glucose-1-phosphate adenylyltransferase (425 aa).

Alpha-D-glucose 1-phosphate-binding positions include Tyr110, Gly175, 190–191, and Ser208; that span reads EK.

The protein belongs to the bacterial/plant glucose-1-phosphate adenylyltransferase family. Homotetramer.

The enzyme catalyses alpha-D-glucose 1-phosphate + ATP + H(+) = ADP-alpha-D-glucose + diphosphate. The protein operates within glycan biosynthesis; glycogen biosynthesis. Involved in the biosynthesis of ADP-glucose, a building block required for the elongation reactions to produce glycogen. Catalyzes the reaction between ATP and alpha-D-glucose 1-phosphate (G1P) to produce pyrophosphate and ADP-Glc. The protein is Glucose-1-phosphate adenylyltransferase of Nitrosospira multiformis (strain ATCC 25196 / NCIMB 11849 / C 71).